A 264-amino-acid chain; its full sequence is MKQYHDLCRHILDQGVVKEDRTGTGTTSVFGYQMRFNLQEGFPLITTKKLHIRSIIHELLWFISGETNVRYLQDNGVRIWNEWADEEGNLGPVYGSQWRSFPRPDGSSVDQLAQVIEQIKTNPDSRRLIVSAWNPGQLEEMALPPCHLLFQFYVADGKLSCQLYQRSADTFLGVPFNIASYALLTHMVAHVTGLEVGDFVHTLGDAHIYHNHLEQVELQLSRDPRPLPKLNIVRDVSSIESFRFEDFEILGYDPHPHIKGEVSV.

Residue Arg-21 participates in dUMP binding. His-51 is a binding site for (6R)-5,10-methylene-5,6,7,8-tetrahydrofolate. 126 to 127 provides a ligand contact to dUMP; sequence RR. Cys-146 functions as the Nucleophile in the catalytic mechanism. DUMP-binding positions include 166 to 169, Asn-177, and 207 to 209; these read RSAD and HIY. Residue Asp-169 participates in (6R)-5,10-methylene-5,6,7,8-tetrahydrofolate binding. Ser-263 contributes to the (6R)-5,10-methylene-5,6,7,8-tetrahydrofolate binding site.

The protein belongs to the thymidylate synthase family. Bacterial-type ThyA subfamily. In terms of assembly, homodimer.

It localises to the cytoplasm. It catalyses the reaction dUMP + (6R)-5,10-methylene-5,6,7,8-tetrahydrofolate = 7,8-dihydrofolate + dTMP. It functions in the pathway pyrimidine metabolism; dTTP biosynthesis. Its function is as follows. Catalyzes the reductive methylation of 2'-deoxyuridine-5'-monophosphate (dUMP) to 2'-deoxythymidine-5'-monophosphate (dTMP) while utilizing 5,10-methylenetetrahydrofolate (mTHF) as the methyl donor and reductant in the reaction, yielding dihydrofolate (DHF) as a by-product. This enzymatic reaction provides an intracellular de novo source of dTMP, an essential precursor for DNA biosynthesis. This Exiguobacterium sp. (strain ATCC BAA-1283 / AT1b) protein is Thymidylate synthase.